A 96-amino-acid polypeptide reads, in one-letter code: Large ribosomal subunit protein bL27 (96 aa).

The propeptide occupies 1 to 9 (MLRLDLQFF). Residues 13 to 35 (KGVGSTKNGRDSQSKRLGAKRAD) are disordered.

It belongs to the bacterial ribosomal protein bL27 family. The N-terminus is cleaved by ribosomal processing cysteine protease Prp.

In Bacillus cereus (strain B4264), this protein is Large ribosomal subunit protein bL27.